Reading from the N-terminus, the 638-residue chain is Polypeptide N-acetylgalactosaminyltransferase 15 (638 aa).

Over 1–12 the chain is Cytoplasmic; it reads MLPRKRPRSGRS. The chain crosses the membrane as a helical; Signal-anchor for type II membrane protein span at residues 13-35; the sequence is RLQFLLLFLTLGCVLMMVILLHP. The Lumenal segment spans residues 36-638; sequence PPPTLHQAVT…FDQIHPVDER (603 aa). The tract at residues 134 to 157 is disordered; sequence KDWRTEEDGEESEEVLTPLGPDSD. Cystine bridges form between cysteine 181/cysteine 411, cysteine 402/cysteine 481, cysteine 516/cysteine 535, cysteine 561/cysteine 574, and cysteine 602/cysteine 619. Residues 190–299 are catalytic subdomain A; the sequence is LPTASVILCF…PGWLEPLLSR (110 aa). Positions 231 and 260 each coordinate substrate. Residues aspartate 283, histidine 285, and histidine 416 each coordinate Mn(2+). Residues 357 to 419 form a catalytic subdomain B region; sequence PVRSPVVPRE…PCSRVGHIYR (63 aa). Arginine 419 lines the substrate pocket. Positions 503-630 constitute a Ricin B-type lectin domain; it reads RFSGKLHNTG…GKTSQLWRFD (128 aa). Asparagine 573 is a glycosylation site (N-linked (GlcNAc...) asparagine).

This sequence belongs to the glycosyltransferase 2 family. GalNAc-T subfamily. It depends on Mn(2+) as a cofactor. Specifically expressed in testis.

It is found in the golgi apparatus membrane. The enzyme catalyses L-seryl-[protein] + UDP-N-acetyl-alpha-D-galactosamine = a 3-O-[N-acetyl-alpha-D-galactosaminyl]-L-seryl-[protein] + UDP + H(+). It carries out the reaction L-threonyl-[protein] + UDP-N-acetyl-alpha-D-galactosamine = a 3-O-[N-acetyl-alpha-D-galactosaminyl]-L-threonyl-[protein] + UDP + H(+). Its pathway is protein modification; protein glycosylation. Its function is as follows. Catalyzes the initial reaction in O-linked oligosaccharide biosynthesis, the transfer of an N-acetyl-D-galactosamine residue to a serine or threonine residue on the protein receptor. Although it displays a much weaker activity toward all substrates tested compared to GALNT2, it is able to transfer up to seven GalNAc residues to the Muc5AC peptide, suggesting that it can fill vicinal Thr/Ser residues in cooperation with other GALNT proteins. Prefers Muc1a as substrate. The chain is Polypeptide N-acetylgalactosaminyltransferase 15 (Galnt15) from Mus musculus (Mouse).